The following is a 108-amino-acid chain: ER membrane protein complex subunit 6 (108 aa).

The next 3 helical transmembrane spans lie at 21–41 (VVSF…GILG), 45–65 (YEGL…LFAL), and 86–106 (ILDG…LVYV).

Belongs to the EMC6 family.

The protein localises to the endoplasmic reticulum membrane. The sequence is that of ER membrane protein complex subunit 6 from Schizosaccharomyces pombe (strain 972 / ATCC 24843) (Fission yeast).